The primary structure comprises 364 residues: tRNA 2-selenouridine synthase (364 aa).

Residues 14–137 form the Rhodanese domain; sequence LLADTPLIDV…LRQTAIQATW (124 aa). Cys97 serves as the catalytic S-selanylcysteine intermediate. Gly149 serves as a coordination point for (2E)-geranyl diphosphate.

This sequence belongs to the SelU family. In terms of assembly, monomer.

The enzyme catalyses 5-methylaminomethyl-2-thiouridine(34) in tRNA + selenophosphate + (2E)-geranyl diphosphate + H2O + H(+) = 5-methylaminomethyl-2-selenouridine(34) in tRNA + (2E)-thiogeraniol + phosphate + diphosphate. It carries out the reaction 5-methylaminomethyl-2-thiouridine(34) in tRNA + (2E)-geranyl diphosphate = 5-methylaminomethyl-S-(2E)-geranyl-thiouridine(34) in tRNA + diphosphate. The catalysed reaction is 5-methylaminomethyl-S-(2E)-geranyl-thiouridine(34) in tRNA + selenophosphate + H(+) = 5-methylaminomethyl-2-(Se-phospho)selenouridine(34) in tRNA + (2E)-thiogeraniol. It catalyses the reaction 5-methylaminomethyl-2-(Se-phospho)selenouridine(34) in tRNA + H2O = 5-methylaminomethyl-2-selenouridine(34) in tRNA + phosphate. Its function is as follows. Involved in the post-transcriptional modification of the uridine at the wobble position (U34) of tRNA(Lys), tRNA(Glu) and tRNA(Gln). Catalyzes the conversion of 2-thiouridine (S2U-RNA) to 2-selenouridine (Se2U-RNA). Acts in a two-step process involving geranylation of 2-thiouridine (S2U) to S-geranyl-2-thiouridine (geS2U) and subsequent selenation of the latter derivative to 2-selenouridine (Se2U) in the tRNA chain. The sequence is that of tRNA 2-selenouridine synthase from Salmonella typhimurium (strain LT2 / SGSC1412 / ATCC 700720).